Here is a 340-residue protein sequence, read N- to C-terminus: Phosphate acyltransferase (340 aa).

The protein belongs to the PlsX family. Homodimer. Probably interacts with PlsY.

The protein localises to the cytoplasm. The catalysed reaction is a fatty acyl-[ACP] + phosphate = an acyl phosphate + holo-[ACP]. It functions in the pathway lipid metabolism; phospholipid metabolism. Its function is as follows. Catalyzes the reversible formation of acyl-phosphate (acyl-PO(4)) from acyl-[acyl-carrier-protein] (acyl-ACP). This enzyme utilizes acyl-ACP as fatty acyl donor, but not acyl-CoA. The chain is Phosphate acyltransferase from Helicobacter pylori (strain HPAG1).